A 121-amino-acid polypeptide reads, in one-letter code: U15-barytoxin-Tl1a (121 aa).

A signal peptide spans 1 to 17; that stretch reads MKLSVIVLVASFGFAVA. 4 cysteine pairs are disulfide-bonded: Cys-56-Cys-74, Cys-67-Cys-80, Cys-71-Cys-119, and Cys-73-Cys-90.

The protein belongs to the neurotoxin 03 (Tx2) family. 03 subfamily. As to expression, expressed by the venom gland.

It localises to the secreted. Functionally, ion channel inhibitor. The sequence is that of U15-barytoxin-Tl1a from Trittame loki (Brush-footed trapdoor spider).